A 163-amino-acid polypeptide reads, in one-letter code: Putative 4-hydroxy-4-methyl-2-oxoglutarate aldolase (163 aa).

Residues Gly-76–Ile-79 and Arg-98 contribute to the substrate site. A divalent metal cation is bound at residue Asp-99.

Belongs to the class II aldolase/RraA-like family. In terms of assembly, homotrimer. It depends on a divalent metal cation as a cofactor.

It catalyses the reaction 4-hydroxy-4-methyl-2-oxoglutarate = 2 pyruvate. The enzyme catalyses oxaloacetate + H(+) = pyruvate + CO2. Its function is as follows. Catalyzes the aldol cleavage of 4-hydroxy-4-methyl-2-oxoglutarate (HMG) into 2 molecules of pyruvate. Also contains a secondary oxaloacetate (OAA) decarboxylase activity due to the common pyruvate enolate transition state formed following C-C bond cleavage in the retro-aldol and decarboxylation reactions. This chain is Putative 4-hydroxy-4-methyl-2-oxoglutarate aldolase, found in Pseudomonas fluorescens.